The following is a 612-amino-acid chain: Zinc metalloproteinase-disintegrin-like berythractivase (612 aa).

A signal peptide spans 1-20 (MIQVLLVIICLEAFPYQGSS). The propeptide occupies 21–187 (IILESGNVND…EPIKKASLLN (167 aa)). The 197-residue stretch at 200-396 (KYVEFVVVLD…NRPQCLLNKP (197 aa)) folds into the Peptidase M12B domain. Residue glutamate 203 participates in Ca(2+) binding. A glycan (N-linked (GlcNAc...) asparagine) is linked at asparagine 260. Position 287 (aspartate 287) interacts with Ca(2+). 3 disulfides stabilise this stretch: cysteine 311/cysteine 391, cysteine 351/cysteine 375, and cysteine 353/cysteine 358. Residue histidine 336 coordinates Zn(2+). Glutamate 337 is a catalytic residue. Zn(2+)-binding residues include histidine 340 and histidine 346. Residue asparagine 348 is glycosylated (N-linked (GlcNAc...) asparagine). N-linked (GlcNAc...) asparagine glycosylation occurs at asparagine 374. Cysteine 391, asparagine 394, valine 406, asparagine 409, leucine 411, glutamate 413, glutamate 416, and aspartate 419 together coordinate Ca(2+). The Disintegrin domain maps to 404-490 (PPVCGNELLE…DCPMDDFQRN (87 aa)). 14 disulfides stabilise this stretch: cysteine 407–cysteine 436, cysteine 418–cysteine 431, cysteine 420–cysteine 426, cysteine 430–cysteine 453, cysteine 444–cysteine 450, cysteine 449–cysteine 475, cysteine 462–cysteine 482, cysteine 469–cysteine 501, cysteine 494–cysteine 506, cysteine 513–cysteine 563, cysteine 528–cysteine 574, cysteine 541–cysteine 551, cysteine 558–cysteine 600, and cysteine 594–cysteine 605. Asparagine 432 carries an N-linked (GlcNAc...) asparagine glycan. Residues 468 to 470 (DCD) carry the D/ECD-tripeptide motif. The Ca(2+) site is built by aspartate 470, leucine 471, glutamate 473, and aspartate 485.

Belongs to the venom metalloproteinase (M12B) family. P-III subfamily. P-IIIa sub-subfamily. As to quaternary structure, monomer. Zn(2+) serves as cofactor. Highly glycosylated. Expressed by the venom gland.

Its subcellular location is the secreted. With respect to regulation, inhibited by EDTA and o-phenanthroline. Not inhibited by PMSF, benzamidine, irreversible serine-proteinase inhibitors and cysteine proteinase inhibitor E-64. Its function is as follows. Potent activator of prothrombin (F2). Does not elicit any hemorrhagic response. Barely inhibits collagen-induced platelet aggregation. Binds neither collagen, nor the jararhagin monoclonal antibody MAJar3. Hydrolyzes the Aalpha-chain of fibrin and fibrinogen, without affecting the Bbeta- and gamma-chains. Is capable of triggering endothelial pro-inflammatory and procoagulant cell responses, but fails to trigger apoptosis. Induces von Willebrand factor release, and the expression of both ICAM1 and E-selectin (SELE) (without increase in VCAM1) in endothelial cells (HUVEC). Is also able to up-regulate the synthesis of the coagulation factor TF (F3). Enhances nitric oxide (NO) generation, prostacyclin production and interleukin-8 release. In Bothrops erythromelas (Caatinga lance head), this protein is Zinc metalloproteinase-disintegrin-like berythractivase.